Here is a 112-residue protein sequence, read N- to C-terminus: Small ribosomal subunit protein uS17 (112 aa).

It belongs to the universal ribosomal protein uS17 family. In terms of assembly, part of the 30S ribosomal subunit.

Its function is as follows. One of the primary rRNA binding proteins, it binds specifically to the 5'-end of 16S ribosomal RNA. This Haloarcula marismortui (strain ATCC 43049 / DSM 3752 / JCM 8966 / VKM B-1809) (Halobacterium marismortui) protein is Small ribosomal subunit protein uS17.